The primary structure comprises 332 residues: Formamidase (332 aa).

One can recognise a CN hydrolase domain in the interval 14–259 (FLTALIQYPV…WEIVTAEVYP (246 aa)). The Proton acceptor role is filled by glutamate 60. The active-site Proton donor is the lysine 132. The active-site Nucleophile is the cysteine 165.

Belongs to the carbon-nitrogen hydrolase superfamily. Aliphatic amidase family.

It carries out the reaction formamide + H2O = formate + NH4(+). Is an aliphatic amidase with a restricted substrate specificity, as it only hydrolyzes formamide. This Bacillus cereus (strain ZK / E33L) protein is Formamidase.